The following is a 385-amino-acid chain: Period circadian protein (385 aa).

Disordered stretches follow at residues Thr28–Val121, Gly169–Glu189, and Ser322–Gly351. A compositionally biased stretch (low complexity) spans Ser71–Thr93. Over residues Gly94–Ser115 the composition is skewed to gly residues. The span at His340–Gly351 shows a compositional bias: polar residues.

Forms a heterodimer with timeless (TIM); the complex then translocates into the nucleus. Phosphorylated with a circadian rhythmicity, probably by the double-time protein (dbt). Phosphorylation could be implicated in the stability of per monomer and in the formation of heterodimer per-tim.

Its subcellular location is the nucleus. It localises to the cytoplasm. It is found in the perinuclear region. In terms of biological role, essential for biological clock functions. Determines the period length of circadian and ultradian rhythms; an increase in PER dosage leads to shortened circadian rhythms and a decrease leads to lengthened circadian rhythms. Essential for the circadian rhythmicity of locomotor activity, eclosion behavior, and for the rhythmic component of the male courtship song that originates in the thoracic nervous system. The biological cycle depends on the rhythmic formation and nuclear localization of the TIM-PER complex. Light induces the degradation of TIM, which promotes elimination of PER. Nuclear activity of the heterodimer coordinatively regulates PER and TIM transcription through a negative feedback loop. Behaves as a negative element in circadian transcriptional loop. Does not appear to bind DNA, suggesting indirect transcriptional inhibition. This chain is Period circadian protein (per), found in Drosophila nebulosa (Fruit fly).